A 297-amino-acid polypeptide reads, in one-letter code: Heme A synthase (297 aa).

The Cytoplasmic portion of the chain corresponds to 1–6; it reads MHKRLK. Residues 7–27 traverse the membrane as a helical segment; that stretch reads IYSVITSIGVLIVLLQGALVT. The Extracellular segment spans residues 28–62; it reads KTGSGEGCGATWPLCFGEVIPTNPAIETIIEYSHR. Cysteines 35 and 42 form a disulfide. Glu58 is an active-site residue. A heme o-binding site is contributed by His61. A helical transmembrane segment spans residues 63–83; the sequence is IVSGLVGAMIIILAIWAWKQL. Topologically, residues 84–93 are cytoplasmic; that stretch reads KHMREAKALS. A helical transmembrane segment spans residues 94 to 114; that stretch reads FAAVILIIFQGLLGAGAVVFG. The Extracellular segment spans residues 115 to 118; the sequence is QSKA. A helical membrane pass occupies residues 119-139; sequence ILALHFGISAMSLAAVVLLTI. His123 provides a ligand contact to heme o. The Cytoplasmic segment spans residues 140 to 156; the sequence is LAFEDGREHTMAPKVSR. Residues 157-177 traverse the membrane as a helical segment; that stretch reads GFKYYVFFVITYCYAVIYSGA. The Extracellular segment spans residues 178–210; sequence YVKHSEATLACAGFPLCNGQIFPGLYGPVGAHY. Residues Cys188 and Cys194 are joined by a disulfide bond. Residues 211 to 231 traverse the membrane as a helical segment; that stretch reads FHRVVGTILLLFLLILMIWTL. Position 212 (His212) interacts with heme b. The Cytoplasmic segment spans residues 232–242; it reads SRYRHYRVLTW. A helical transmembrane segment spans residues 243–263; it reads TAVLSFLLVVGQFISGISIVF. At 264 to 271 the chain is on the extracellular side; it reads TQNALSVG. Residues 272 to 292 form a helical membrane-spanning segment; that stretch reads LIHALIISILFSALSYMTMII. Residue His274 participates in heme b binding. Over 293–297 the chain is Cytoplasmic; the sequence is TRPSH.

The protein belongs to the COX15/CtaA family. Type 1 subfamily. Interacts with CtaB. Heme b is required as a cofactor.

It localises to the cell membrane. It catalyses the reaction Fe(II)-heme o + 2 A + H2O = Fe(II)-heme a + 2 AH2. The protein operates within porphyrin-containing compound metabolism; heme A biosynthesis; heme A from heme O: step 1/1. Its function is as follows. Catalyzes the conversion of heme O to heme A by two successive hydroxylations of the methyl group at C8. The first hydroxylation forms heme I, the second hydroxylation results in an unstable dihydroxymethyl group, which spontaneously dehydrates, resulting in the formyl group of heme A. This is Heme A synthase from Alkalihalophilus pseudofirmus (strain ATCC BAA-2126 / JCM 17055 / OF4) (Bacillus pseudofirmus).